A 246-amino-acid polypeptide reads, in one-letter code: MYTRYSYNPSLGRTYVYDNKFYKNLGSVIKNAKRKEHLALHEIEERTLDPLERYVVAEDPFLGPGKNQKLTLFKEIRIVKPDTMKLVVNWSGKEFLRETWTRFMEDSFPIVNDQEIMDVFLVINMRPTRPNRCFRFLAQHALRCDPDYVPHEVIRIVEPVYVGNNNEYRISLAKKGGGCPVMNLHSEYTHSFEEFINRVIWENFYKPIVYVGTDSGEEEEILLELSLVFKIKEFAPDAPLYNGPAY.

Belongs to the polyhedrin family.

Its function is as follows. Major component of the virus occlusion bodies, which are large proteinaceous structures (polyhedra), that protect the virus from the outside environment for extended periods until they are ingested by insect larvae. This Lepidoptera (butterflies and moths) protein is Polyhedrin (PH).